The chain runs to 173 residues: NADH-ubiquinone oxidoreductase chain 6 (173 aa).

The next 5 membrane-spanning stretches (helical) occupy residues 1-21 (MAYI…SVAS), 25-45 (PYFA…VLMG), 53-73 (LVLF…CAAL), 87-107 (VLGS…WFWG), and 139-159 (LGGG…LVVL).

This sequence belongs to the complex I subunit 6 family.

It is found in the mitochondrion membrane. It catalyses the reaction a ubiquinone + NADH + 5 H(+)(in) = a ubiquinol + NAD(+) + 4 H(+)(out). Functionally, core subunit of the mitochondrial membrane respiratory chain NADH dehydrogenase (Complex I) that is believed to belong to the minimal assembly required for catalysis. Complex I functions in the transfer of electrons from NADH to the respiratory chain. The immediate electron acceptor for the enzyme is believed to be ubiquinone. This chain is NADH-ubiquinone oxidoreductase chain 6 (MT-ND6), found in Gadus morhua (Atlantic cod).